Reading from the N-terminus, the 450-residue chain is Tubulin alpha-1 chain (450 aa).

GTP-binding residues include Gln11, Glu71, Gly144, Thr145, Thr179, Asn206, and Asn228. Glu71 is a binding site for Mg(2+). The active site involves Glu254. At Thr349 the chain carries Phosphothreonine. The tract at residues 431–450 (DYEEVGGEGAEDDDEEGDEY) is disordered.

The protein belongs to the tubulin family. As to quaternary structure, dimer of alpha and beta chains. A typical microtubule is a hollow water-filled tube with an outer diameter of 25 nm and an inner diameter of 15 nM. Alpha-beta heterodimers associate head-to-tail to form protofilaments running lengthwise along the microtubule wall with the beta-tubulin subunit facing the microtubule plus end conferring a structural polarity. Microtubules usually have 13 protofilaments but different protofilament numbers can be found in some organisms and specialized cells. It depends on Mg(2+) as a cofactor. Post-translationally, undergoes a tyrosination/detyrosination cycle, the cyclic removal and re-addition of a C-terminal tyrosine residue by the enzymes tubulin tyrosine carboxypeptidase (TTCP) and tubulin tyrosine ligase (TTL), respectively.

It is found in the cytoplasm. The protein resides in the cytoskeleton. The catalysed reaction is GTP + H2O = GDP + phosphate + H(+). Functionally, tubulin is the major constituent of microtubules, a cylinder consisting of laterally associated linear protofilaments composed of alpha- and beta-tubulin heterodimers. Microtubules grow by the addition of GTP-tubulin dimers to the microtubule end, where a stabilizing cap forms. Below the cap, tubulin dimers are in GDP-bound state, owing to GTPase activity of alpha-tubulin. The chain is Tubulin alpha-1 chain (TUBA1) from Arabidopsis thaliana (Mouse-ear cress).